The chain runs to 331 residues: ADP,ATP carrier protein 2, mitochondrial (331 aa).

3 Solcar repeats span residues 29–122 (KNFA…FKRM), 134–226 (KWFG…LKPV), and 238–320 (ASFA…LQIL). Transmembrane regions (helical) follow at residues 31 to 58 (FAID…VKLL), 99 to 123 (TANV…KRMF), 132 to 152 (YWKW…SSLF), 202 to 223 (FNIS…YDSL), and 237 to 257 (FASF…SYPI). ADP is bound by residues R104 and K116. An ADP-binding site is contributed by R261. The interval 261-266 (RRRMMM) is important for transport activity. The Nucleotide carrier signature motif motif lies at 261–266 (RRRMMM). The chain crosses the membrane as a helical span at residues 297–317 (AGANILRAIAGAGVLSGYDQL).

Belongs to the mitochondrial carrier (TC 2.A.29) family. Monomer.

The protein localises to the mitochondrion inner membrane. It carries out the reaction ADP(in) + ATP(out) = ADP(out) + ATP(in). The matrix-open state (m-state) is inhibited by the membrane-permeable bongkrekic acid (BKA). The cytoplasmic-open state (c-state) is inhibited by the membrane-impermeable toxic inhibitor carboxyatractyloside (CATR). Its function is as follows. ADP:ATP antiporter that mediates import of ADP into the mitochondrial matrix for ATP synthesis, and export of ATP out to fuel the cell. Cycles between the cytoplasmic-open state (c-state) and the matrix-open state (m-state): operates by the alternating access mechanism with a single substrate-binding site intermittently exposed to either the cytosolic (c-state) or matrix (m-state) side of the inner mitochondrial membrane. This Triticum aestivum (Wheat) protein is ADP,ATP carrier protein 2, mitochondrial (ANT-G2).